The sequence spans 393 residues: Cysteine protease ATG4B (393 aa).

Methionine 1 is modified (N-acetylmethionine). Serine 34 is modified (phosphoserine). The active-site Nucleophile is the cysteine 74. At cysteine 189 the chain carries S-nitrosocysteine. Catalysis depends on residues aspartate 278 and histidine 280. Cysteine 292 and cysteine 301 each carry S-nitrosocysteine. Cysteine 292 and cysteine 361 form a disulfide bridge. Residues serine 316 and serine 383 each carry the phosphoserine modification. The short motif at 388–391 (FEIL) is the LIR element. Phosphoserine is present on serine 392.

Belongs to the peptidase C54 family. In terms of assembly, interacts with PFKP; promoting phosphorylation of ATG4B at Ser-34. Interacts with GBP7. Phosphorylation at Ser-383 and Ser-392 promotes autophagy by increasing protein delipidation activity without affecting proteolytic activation of ATG8 proteins. Phosphorylation at Ser-316 by ULK1 inhibits autophagy by decreasing both proteolytic activation and delipidation activities. Phosphorylation at Ser-316 is dephosphorylated by protein phosphatase 2A (PP2A). Phosphorylation at Ser-34 by AKT2 promotes its hydrolase activity, leading to increased proteolytic activation and delipidation of ATG8 family proteins. Phosphorylation at Ser-34 by AKT1 promotes mitochondrial localization and inhibition of the F1F0-ATP synthase activity, leading to elevation of mitochondrial reactive oxygen species (ROS). Post-translationally, ubiquitinated by RNF5, leading to its degradation by the proteasome. In terms of processing, S-nitrosylation at Cys-189 and Cys-292 in response to high glucose decreases both proteolytic activation and delipidation activities. O-glycosylated by OGT, leading to increase protease activity, thereby promoting the proteolytic activation of ATG8 family proteins. Post-translationally, forms reversible intrachain disulfide bonds in response to oxidative stress. Forms interchain disulfide bonds, leading to formation of homooligomers in response to oxidation.

Its subcellular location is the cytoplasm. The protein localises to the cytosol. It localises to the cytoplasmic vesicle. It is found in the autophagosome. The protein resides in the endoplasmic reticulum. Its subcellular location is the mitochondrion. The enzyme catalyses [protein]-C-terminal L-amino acid-glycyl-phosphatidylethanolamide + H2O = [protein]-C-terminal L-amino acid-glycine + a 1,2-diacyl-sn-glycero-3-phosphoethanolamine. It carries out the reaction [protein]-C-terminal L-amino acid-glycyl-phosphatidylserine + H2O = [protein]-C-terminal L-amino acid-glycine + a 1,2-diacyl-sn-glycero-3-phospho-L-serine. Inhibited by N-ethylmaleimide. Redox-regulated during autophagy since reducing conditions activate ATG4A whereas an oxidizing environment such as the presence of H(2)O(2) inhibits its activity. The cysteine protease activity compounds is inhibited by styrylquinoline compounds 4-28 and LV-320. Its function is as follows. Cysteine protease that plays a key role in autophagy by mediating both proteolytic activation and delipidation of ATG8 family proteins. Required for canonical autophagy (macroautophagy), non-canonical autophagy as well as for mitophagy. The protease activity is required for proteolytic activation of ATG8 family proteins: cleaves the C-terminal amino acid of ATG8 proteins MAP1LC3A, MAP1LC3B, MAP1LC3C, GABARAPL1, GABARAPL2 and GABARAP, to reveal a C-terminal glycine. Exposure of the glycine at the C-terminus is essential for ATG8 proteins conjugation to phosphatidylethanolamine (PE) and insertion to membranes, which is necessary for autophagy. Protease activity is also required to counteract formation of high-molecular weight conjugates of ATG8 proteins (ATG8ylation): acts as a deubiquitinating-like enzyme that removes ATG8 conjugated to other proteins, such as ATG3. In addition to the protease activity, also mediates delipidation of ATG8 family proteins. Catalyzes delipidation of PE-conjugated forms of ATG8 proteins during macroautophagy. Also involved in non-canonical autophagy, a parallel pathway involving conjugation of ATG8 proteins to single membranes at endolysosomal compartments, by catalyzing delipidation of ATG8 proteins conjugated to phosphatidylserine (PS). Compared to other members of the family (ATG4A, ATG4C or ATG4C), constitutes the major protein for proteolytic activation of ATG8 proteins, while it displays weaker delipidation activity than other ATG4 paralogs. Involved in phagophore growth during mitophagy independently of its protease activity and of ATG8 proteins: acts by regulating ATG9A trafficking to mitochondria and promoting phagophore-endoplasmic reticulum contacts during the lipid transfer phase of mitophagy. This Mus musculus (Mouse) protein is Cysteine protease ATG4B.